Here is a 62-residue protein sequence, read N- to C-terminus: Photosystem II reaction center X protein (62 aa).

The chain crosses the membrane as a helical span at residues 26-46 (IASFFAAALLIVIPAATFLIF).

This sequence belongs to the PsbX family. Type 2 subfamily. In terms of assembly, PSII consists of a core antenna complex that captures photons, and an electron transfer chain that converts photonic excitation into a charge separation. PSII forms dimeric complexes.

The protein localises to the cellular thylakoid membrane. Functionally, involved in the binding and/or turnover of quinones at the Q(B) site of Photosystem II. This chain is Photosystem II reaction center X protein, found in Prochlorococcus marinus (strain MIT 9515).